Reading from the N-terminus, the 263-residue chain is LOB domain-containing protein 41 (263 aa).

The 107-residue stretch at 3-109 (MSCNGCRVLR…VEAVMKGEPV (107 aa)) folds into the LOB domain. Positions 162–204 (TVAIQAESEGKSDEASHDSSLSHQSEIVAAHEGESKESESNVS) are disordered. 2 stretches are compositionally biased toward basic and acidic residues: residues 169-178 (SEGKSDEASH) and 190-200 (AAHEGESKESE).

Belongs to the LOB domain-containing protein family. Expressed in young shoots, roots, stems, leaves and flowers.

The polypeptide is LOB domain-containing protein 41 (LBD41) (Arabidopsis thaliana (Mouse-ear cress)).